Consider the following 460-residue polypeptide: Polygalacturonase (460 aa).

Residues methionine 1–glycine 26 form the signal peptide. A glycan (N-linked (GlcNAc...) asparagine) is linked at asparagine 280. Aspartate 292 (proton donor) is an active-site residue. Histidine 315 is an active-site residue. Asparagine 421 is a glycosylation site (N-linked (GlcNAc...) asparagine).

Belongs to the glycosyl hydrolase 28 family.

It is found in the secreted. Its subcellular location is the cell wall. It catalyses the reaction (1,4-alpha-D-galacturonosyl)n+m + H2O = (1,4-alpha-D-galacturonosyl)n + (1,4-alpha-D-galacturonosyl)m.. Acts in concert with the pectinesterase, in the ripening process. Is involved in cell wall metabolism, specifically in polyuronide degradation. This is Polygalacturonase from Malus domestica (Apple).